Consider the following 683-residue polypeptide: PTS system mannose-specific EIIBCA component (683 aa).

The PTS EIIB type-1 domain occupies 1–89 (MASKLTTTSQ…LKLDGMKHFA (89 aa)). The Phosphocysteine intermediate; for EIIB activity role is filled by C28. The 360-residue stretch at 117–476 (EFLSDTFRPI…NEERDEARAK (360 aa)) folds into the PTS EIIC type-1 domain. 10 helical membrane-spanning segments follow: residues 126-146 (ILWA…ADTF), 162-182 (YVFL…MVGA), 193-213 (WIGA…LGSA), 225-245 (VLND…GLYW), 260-280 (MVFV…FLLG), 303-323 (FILS…GLHW), 344-364 (PMGA…LLSI), 376-396 (LGGM…YGVL), 409-429 (GCLA…AFVF), and 442-462 (LGYT…VLAL). The PTS EIIA type-1 domain occupies 550–654 (DPIFAAGKLG…PLITPVVVSN (105 aa)). H602 acts as the Tele-phosphohistidine intermediate; for EIIA activity in catalysis.

The protein resides in the cell membrane. The catalysed reaction is D-mannose(out) + N(pros)-phospho-L-histidyl-[protein] = D-mannose 6-phosphate(in) + L-histidyl-[protein]. Its function is as follows. The phosphoenolpyruvate-dependent sugar phosphotransferase system (sugar PTS), a major carbohydrate active -transport system, catalyzes the phosphorylation of incoming sugar substrates concomitantly with their translocation across the cell membrane. This system is involved in mannose transport. This chain is PTS system mannose-specific EIIBCA component (ptsM), found in Corynebacterium glutamicum (strain ATCC 13032 / DSM 20300 / JCM 1318 / BCRC 11384 / CCUG 27702 / LMG 3730 / NBRC 12168 / NCIMB 10025 / NRRL B-2784 / 534).